We begin with the raw amino-acid sequence, 358 residues long: Cytochrome c peroxidase, mitochondrial (358 aa).

Residues 1 to 38 constitute a mitochondrion transit peptide; sequence MAASRTATRTLRALRTSTRPALTAAPRAAFRQGGRRLY. Histidine 119 serves as the catalytic Proton acceptor. The tract at residues 192–214 is disordered; sequence PYRPGRQDRDAAGCTPDGRLPDA. Histidine 242 lines the heme b pocket. Tryptophan 258 serves as the catalytic Tryptophan radical intermediate.

The protein belongs to the peroxidase family. Cytochrome c peroxidase subfamily. In terms of assembly, forms a one-to-one complex with cytochrome c. Requires heme b as cofactor.

The protein resides in the mitochondrion matrix. The protein localises to the mitochondrion intermembrane space. The catalysed reaction is 2 Fe(II)-[cytochrome c] + H2O2 + 2 H(+) = 2 Fe(III)-[cytochrome c] + 2 H2O. In terms of biological role, destroys radicals which are normally produced within the cells and which are toxic to biological systems. In Neurospora crassa (strain ATCC 24698 / 74-OR23-1A / CBS 708.71 / DSM 1257 / FGSC 987), this protein is Cytochrome c peroxidase, mitochondrial (ccp-1).